An 89-amino-acid chain; its full sequence is Probable Fe(2+)-trafficking protein (89 aa).

This sequence belongs to the Fe(2+)-trafficking protein family.

Could be a mediator in iron transactions between iron acquisition and iron-requiring processes, such as synthesis and/or repair of Fe-S clusters in biosynthetic enzymes. The sequence is that of Probable Fe(2+)-trafficking protein from Stenotrophomonas maltophilia (strain K279a).